The chain runs to 398 residues: Cytohesin-1 (398 aa).

At methionine 1 the chain carries N-acetylmethionine. Positions 10–67 form a coiled coil; the sequence is SDLTAEERQELENIRRRKQELLADIQRLKDEIAEVANEIENLGSTEERKNMQRNKQVA. An SEC7 domain is found at 73 to 202; that stretch reads FNMDPKKGIQ…IIMLNTSLHN (130 aa). The region spanning 260 to 377 is the PH domain; sequence NPDREGWLLK…WIKCIKAAIS (118 aa). A 1,2-diacyl-sn-glycero-3-phospho-(1D-myo-inositol-3,4,5-trisphosphate) is bound by residues 269–277, arginine 281, tyrosine 292, arginine 302, and asparagine 351; that span reads KLGGGRVKT. The tract at residues 388–396 is C-terminal autoinhibitory region; the sequence is RKKKVSSTK.

In terms of assembly, interacts with TRIM23 and CYTIP. Interacts (via coiled-coil domain) with FRMD4A (via coiled-coil domain). Interacts with FRMD4B. Found in a complex with PARD3, CYTH1 and FRMD4A. Interacts (via N-terminal domain) with INAVA (via N-terminal domain). In terms of processing, ubiquitinated by SCF(FBXW11) E3 ubiquitin-protein ligase complex. Ubiquitination induces proteasomal degradation.

The protein localises to the cell membrane. The protein resides in the cytoplasm. It localises to the cytosol. Its subcellular location is the cell junction. It is found in the tight junction. The protein localises to the adherens junction. In terms of biological role, promotes guanine-nucleotide exchange on ARF1, ARF5 and ARF6. Promotes the activation of ARF factors through replacement of GDP with GTP. Plays an important role in membrane trafficking, during junctional remodeling and epithelial polarization, through regulation of ARF6 activity. The polypeptide is Cytohesin-1 (CYTH1) (Chlorocebus aethiops (Green monkey)).